The primary structure comprises 149 residues: MQVILLDKIVHLGNVGDQVNVKSGFARNFLIPQGKAVMATKANIEHFEARRAEIEAKVAAELAAAQARAAQIAALEAVTISSKAGDEGRLFGSITTREIAEAVTAAGVEVAKSEVRLSTGPIRTLGDHEVKFQLHGEVFTALNVIVVAE.

The protein belongs to the bacterial ribosomal protein bL9 family.

In terms of biological role, binds to the 23S rRNA. This is Large ribosomal subunit protein bL9 from Mannheimia succiniciproducens (strain KCTC 0769BP / MBEL55E).